A 205-amino-acid polypeptide reads, in one-letter code: Gap junction epsilon-1 protein (205 aa).

At 1-22 the chain is on the cytoplasmic side; it reads MSLNYIKNFYEGCVKPPTVIGQ. Residues 23 to 43 form a helical membrane-spanning segment; sequence FHTLFFGSVRMFFLGVLGFAV. Residues 44-74 lie on the Extracellular side of the membrane; it reads YGNEALHFSCDPDKREINLFCYNQFRPITPQ. Cystine bridges form between Cys53-Cys161 and Cys64-Cys147. Residues 75-95 traverse the membrane as a helical segment; the sequence is VFWALQLVIVLLPGAIFHLYA. Residues 96-111 lie on the Cytoplasmic side of the membrane; sequence ACKSINQDCILQKPVY. A helical transmembrane segment spans residues 112–132; the sequence is TVIYVLSVLLRISLEVFAFWL. The Extracellular portion of the chain corresponds to 133–170; that stretch reads QIHLFGFQVKPIYLCDTESLGKKPNILKCMVPEHFEKT. Residues 171–191 form a helical membrane-spanning segment; sequence IFLIAMYTFTVITMVLCVAEV. The Cytoplasmic portion of the chain corresponds to 192-205; it reads FEIIFRRSCFLFKR.

Belongs to the connexin family. Beta-type (group I) subfamily. As to quaternary structure, a connexon is composed of a hexamer of connexins. As to expression, highly expressed in lens, where it is mainly found in lens fibers and to a lesser extent in lens epithelium. Weakly expressed in retina. Not detected in other tissues tested.

It is found in the cell membrane. Functionally, mediates calcium-independent ATP release, suggesting activity as a hemichannel. Does not form functional gap junctions. May play a non-essential role in eye lens development. The protein is Gap junction epsilon-1 protein of Mus musculus (Mouse).